A 991-amino-acid polypeptide reads, in one-letter code: Phosphate metabolism protein 7 (991 aa).

Topologically, residues 1–9 (MADSSSTSA) are extracellular. A helical membrane pass occupies residues 10–30 (FISTLIIYGLTAVVFVWLFLL). Residues 31–91 (LRPKNRRVYE…TSVDGYFLLR (61 aa)) lie on the Cytoplasmic side of the membrane. The chain crosses the membrane as a helical span at residues 92-112 (YIGIVGSLSFVGCLLLLPILL). The Extracellular segment spans residues 113 to 138 (PVNATNGNNLQGFELLSFSNVTNKNR). N-linked (GlcNAc...) asparagine glycans are attached at residues Asn-115 and Asn-132. Residues 139–159 (FYAHVFLSWIFFGLFTYVIYK) form a helical membrane-spanning segment. At 160–388 (ELYYYVVFRH…ERHSRRAVAN (229 aa)) the chain is on the cytoplasmic side. The helical transmembrane segment at 389-409 (TIMVLLIIFWAFPVAVVGIIS) threads the bilayer. Over 410–437 (NVNFLTDKVPFLRFINNMPTFLMGVITG) the chain is Extracellular. The helical transmembrane segment at 438 to 458 (LLPTIALVVLMSLVPPFIVML) threads the bilayer. Over 459 to 471 (GKLSGCVTRQETD) the chain is Cytoplasmic. The helical transmembrane segment at 472 to 492 (LYSQAWYYAFAVIQIFLVVTA) threads the bilayer. Topologically, residues 493 to 523 (TSSASSTVDSIIDRPRSAMTLLANNLPKASN) are extracellular. The chain crosses the membrane as a helical span at residues 524 to 544 (FYIMYFILKGLTGPTWTILQA). The Cytoplasmic portion of the chain corresponds to 545 to 582 (VNLLLSKVLGRVLDSTPRQKWNRYNTLATPRMGIVYPG). Residues 583–603 (IEILVCIYICYSIIAPILLFF) traverse the membrane as a helical segment. A topological domain (extracellular) is located at residue Ser-604. Residues 605-625 (TVMLTLLYVAYLYNLNYVFGF) traverse the membrane as a helical segment. Residues 626–637 (SFDLKGRNYPRA) are Cytoplasmic-facing. The helical transmembrane segment at 638–658 (LFQIFVGIYLSEVCLLGLFIM) threads the bilayer. Residues 659-661 (AKT) lie on the Extracellular side of the membrane. A helical transmembrane segment spans residues 662–682 (WGPLVLEVFWIVVTALAHIYM). Topologically, residues 683–991 (KRKFIPLFDA…PPDYEPEAKK (309 aa)) are cytoplasmic. The interval 749–787 (KANLIPDNDGSSENGTPSNPFESGSERASLSGSNAESDS) is disordered. Positions 757–785 (DGSSENGTPSNPFESGSERASLSGSNAES) are enriched in polar residues.

It belongs to the CSC1 (TC 1.A.17) family.

It is found in the cell membrane. In terms of biological role, acts as an osmosensitive calcium-permeable cation channel. This Saccharomyces cerevisiae (strain ATCC 204508 / S288c) (Baker's yeast) protein is Phosphate metabolism protein 7 (PHM7).